We begin with the raw amino-acid sequence, 341 residues long: tRNA N6-adenosine threonylcarbamoyltransferase (341 aa).

Residues His-115 and His-119 each coordinate Fe cation. Substrate-binding positions include 137–141 (IVSGG), Asp-170, Gly-183, Asp-187, and Asn-276. Residue Asp-304 coordinates Fe cation.

It belongs to the KAE1 / TsaD family. Requires Fe(2+) as cofactor.

It localises to the cytoplasm. It catalyses the reaction L-threonylcarbamoyladenylate + adenosine(37) in tRNA = N(6)-L-threonylcarbamoyladenosine(37) in tRNA + AMP + H(+). Functionally, required for the formation of a threonylcarbamoyl group on adenosine at position 37 (t(6)A37) in tRNAs that read codons beginning with adenine. Is involved in the transfer of the threonylcarbamoyl moiety of threonylcarbamoyl-AMP (TC-AMP) to the N6 group of A37, together with TsaE and TsaB. TsaD likely plays a direct catalytic role in this reaction. In Staphylococcus aureus (strain JH1), this protein is tRNA N6-adenosine threonylcarbamoyltransferase.